Consider the following 156-residue polypeptide: Small ribosomal subunit protein uS7 (156 aa).

This sequence belongs to the universal ribosomal protein uS7 family. In terms of assembly, part of the 30S ribosomal subunit. Contacts proteins S9 and S11.

Its function is as follows. One of the primary rRNA binding proteins, it binds directly to 16S rRNA where it nucleates assembly of the head domain of the 30S subunit. Is located at the subunit interface close to the decoding center, probably blocks exit of the E-site tRNA. The polypeptide is Small ribosomal subunit protein uS7 (Maricaulis maris (strain MCS10) (Caulobacter maris)).